The chain runs to 101 residues: DNA-binding protein TubR (101 aa).

In terms of assembly, homodimer. Dimers bind to DNA, forming a protein-bound filament which may form a helix around the TubZ filament.

In terms of biological role, a DNA-binding protein that is part of the type III plasmid partition system used to ensure correct segregation of the pBM400 plasmid. Binds the plasmid origin of replication, probably cooperatively, forming a ring or short helix with external DNA. Its effect on RNA expression has not been shown. This chain is DNA-binding protein TubR, found in Priestia megaterium (strain ATCC 12872 / QMB1551) (Bacillus megaterium).